The sequence spans 203 residues: Holliday junction branch migration complex subunit RuvA (203 aa).

Residues 1–64 (MIGRLRGIIL…EDAQLLYGFN (64 aa)) form a domain I region. Residues 65-142 (NKQERMLFRE…KGLHGDLFTP (78 aa)) are domain II. The segment at 143–154 (AADLVLTSPNGP) is flexible linker. Residues 155 to 203 (TSDDAEQEAVAALVALGYKPQEASRMVSKIAKPDANSETLIREALRAAL) form a domain III region.

It belongs to the RuvA family. As to quaternary structure, homotetramer. Forms an RuvA(8)-RuvB(12)-Holliday junction (HJ) complex. HJ DNA is sandwiched between 2 RuvA tetramers; dsDNA enters through RuvA and exits via RuvB. An RuvB hexamer assembles on each DNA strand where it exits the tetramer. Each RuvB hexamer is contacted by two RuvA subunits (via domain III) on 2 adjacent RuvB subunits; this complex drives branch migration. In the full resolvosome a probable DNA-RuvA(4)-RuvB(12)-RuvC(2) complex forms which resolves the HJ.

It is found in the cytoplasm. In terms of biological role, the RuvA-RuvB-RuvC complex processes Holliday junction (HJ) DNA during genetic recombination and DNA repair, while the RuvA-RuvB complex plays an important role in the rescue of blocked DNA replication forks via replication fork reversal (RFR). RuvA specifically binds to HJ cruciform DNA, conferring on it an open structure. The RuvB hexamer acts as an ATP-dependent pump, pulling dsDNA into and through the RuvAB complex. HJ branch migration allows RuvC to scan DNA until it finds its consensus sequence, where it cleaves and resolves the cruciform DNA. This Enterobacter sp. (strain 638) protein is Holliday junction branch migration complex subunit RuvA.